The chain runs to 667 residues: tRNA 5-methylaminomethyl-2-thiouridine biosynthesis bifunctional protein MnmC (667 aa).

A tRNA (mnm(5)s(2)U34)-methyltransferase region spans residues 1–215 (MKFINGILFN…KREMIRAYFN (215 aa)). Residues 240 to 667 (IGAGIAGIVT…LIRKLKKGLK (428 aa)) are FAD-dependent cmnm(5)s(2)U34 oxidoreductase.

This sequence in the N-terminal section; belongs to the methyltransferase superfamily. tRNA (mnm(5)s(2)U34)-methyltransferase family. In the C-terminal section; belongs to the DAO family. The cofactor is FAD.

It is found in the cytoplasm. The catalysed reaction is 5-aminomethyl-2-thiouridine(34) in tRNA + S-adenosyl-L-methionine = 5-methylaminomethyl-2-thiouridine(34) in tRNA + S-adenosyl-L-homocysteine + H(+). Catalyzes the last two steps in the biosynthesis of 5-methylaminomethyl-2-thiouridine (mnm(5)s(2)U) at the wobble position (U34) in tRNA. Catalyzes the FAD-dependent demodification of cmnm(5)s(2)U34 to nm(5)s(2)U34, followed by the transfer of a methyl group from S-adenosyl-L-methionine to nm(5)s(2)U34, to form mnm(5)s(2)U34. In Campylobacter hominis (strain ATCC BAA-381 / DSM 21671 / CCUG 45161 / LMG 19568 / NCTC 13146 / CH001A), this protein is tRNA 5-methylaminomethyl-2-thiouridine biosynthesis bifunctional protein MnmC.